The primary structure comprises 350 residues: Renin receptor (350 aa).

Positions 1–16 (MAVFVVLLALVAGVLG) are cleaved as a signal peptide. Topologically, residues 17 to 302 (NEFSILKSPG…YNLAYKYNFE (286 aa)) are extracellular. The chain crosses the membrane as a helical span at residues 303-323 (YSVVFNMVLWIMIALALAVII). Residues 324-350 (TSYNIWNMDPGYDSIIYRMTNQKIRMD) are Cytoplasmic-facing. The short motif at 346-350 (KIRMD) is the Mediates retrograde transport to the ER element.

As to quaternary structure, interacts with renin. Accessory component of the multisubunit proton-transporting vacuolar (V)-ATPase protein pump. Interacts (via N-terminus) with ATP6AP1 (via N-terminus). Interacts with ATP6V0D1; ATP6V0D1 is a V-ATPase complex subunit and the interaction promotes V-ATPase complex assembly. Interacts with TMEM9; TMEM9 is a V-ATPase assembly regulator and the interaction induces the interaction with ATP6V0D1. Interacts with VMA21 (via N-terminus); VMA21 is a V-ATPase accessory component. In terms of processing, phosphorylated. Post-translationally, proteolytically cleaved by a furin-like convertase in the trans-Golgi network to generate N- and C-terminal fragments. As to expression, expressed in brain, heart, placenta, liver, kidney and pancreas. Barely detectable in lung and skeletal muscles. In the kidney cortex it is restricted to the mesangium of glomeruli. In the coronary and kidney artery it is expressed in the subendothelium, associated to smooth muscles where it colocalizes with REN. Expressed in vascular structures and by syncytiotrophoblast cells in the mature fetal placenta.

The protein resides in the endoplasmic reticulum membrane. It is found in the lysosome membrane. Its subcellular location is the cytoplasmic vesicle. The protein localises to the autophagosome membrane. It localises to the cell projection. The protein resides in the dendritic spine membrane. It is found in the axon. Its subcellular location is the endosome membrane. The protein localises to the clathrin-coated vesicle membrane. It localises to the secretory vesicle. The protein resides in the synaptic vesicle membrane. In terms of biological role, multifunctional protein which functions as a renin, prorenin cellular receptor and is involved in the assembly of the lysosomal proton-transporting V-type ATPase (V-ATPase) and the acidification of the endo-lysosomal system. May mediate renin-dependent cellular responses by activating ERK1 and ERK2. By increasing the catalytic efficiency of renin in AGT/angiotensinogen conversion to angiotensin I, may also play a role in the renin-angiotensin system (RAS). Through its function in V-type ATPase (v-ATPase) assembly and acidification of the lysosome it regulates protein degradation and may control different signaling pathways important for proper brain development, synapse morphology and synaptic transmission. This Homo sapiens (Human) protein is Renin receptor.